The primary structure comprises 117 residues: Large ribosomal subunit protein bL20 (117 aa).

Belongs to the bacterial ribosomal protein bL20 family.

In terms of biological role, binds directly to 23S ribosomal RNA and is necessary for the in vitro assembly process of the 50S ribosomal subunit. It is not involved in the protein synthesizing functions of that subunit. This Leptospira borgpetersenii serovar Hardjo-bovis (strain JB197) protein is Large ribosomal subunit protein bL20.